Consider the following 48-residue polypeptide: uncharacterized protein (48 aa).

Positions 1-30 (MLGRTKLGNRNAQANNNAKKKNGFQTHFDS) are disordered.

This is an uncharacterized protein from Bacillus subtilis (strain 168).